The primary structure comprises 313 residues: Ribosomal RNA small subunit methyltransferase H (313 aa).

S-adenosyl-L-methionine is bound by residues glycine 35–histidine 37, aspartate 55, phenylalanine 80, aspartate 102, and glutamine 109.

This sequence belongs to the methyltransferase superfamily. RsmH family.

The protein localises to the cytoplasm. It catalyses the reaction cytidine(1402) in 16S rRNA + S-adenosyl-L-methionine = N(4)-methylcytidine(1402) in 16S rRNA + S-adenosyl-L-homocysteine + H(+). Its function is as follows. Specifically methylates the N4 position of cytidine in position 1402 (C1402) of 16S rRNA. This Shewanella oneidensis (strain ATCC 700550 / JCM 31522 / CIP 106686 / LMG 19005 / NCIMB 14063 / MR-1) protein is Ribosomal RNA small subunit methyltransferase H.